A 419-amino-acid polypeptide reads, in one-letter code: 3-oxo-isoapionate-4-phosphate decarboxylase (419 aa).

Residues Lys179, Asp181, and Glu182 each contribute to the Mg(2+) site. Lys179 is subject to N6-carboxylysine.

This sequence belongs to the RuBisCO large chain family. Requires Mg(2+) as cofactor.

The enzyme catalyses 3-oxoisoapionate 4-phosphate + H(+) = L-erythrulose 1-phosphate + CO2. It participates in carbohydrate metabolism. Its function is as follows. Involved in catabolism of D-apiose. Catalyzes the decarboxylation of 3-oxo-isoapionate 4-phosphate to L-erythrulose 1-phosphate. The polypeptide is 3-oxo-isoapionate-4-phosphate decarboxylase (Rhizobium rhizogenes (strain K84 / ATCC BAA-868) (Agrobacterium radiobacter)).